Reading from the N-terminus, the 358-residue chain is Dynein axonemal assembly factor 10 (358 aa).

WD repeat units follow at residues 64 to 106 (EKPK…TPVY), 116 to 155 (NCIDGVGGVGIGDGAPEIVTGSRDGTVKVWDPRQKDTPVA), 163 to 206 (EAKR…VRWE), 208 to 250 (NIKN…PTKG), 258 to 298 (AHKS…QRSR), and 320 to 358 (LSTQPISSLDWSPDKKGLCVCTSFDQTVRVLIVTKLNRL).

In terms of assembly, interacts with PIH1D1; the interaction associates DNAAF10 with the R2TP complex. Interacts with several dynein axonemal assembly factors.

It is found in the dynein axonemal particle. Key assembly factor specifically required for the stability of axonemal dynein heavy chains in cytoplasm. In Xenopus laevis (African clawed frog), this protein is Dynein axonemal assembly factor 10 (dnaaf10).